We begin with the raw amino-acid sequence, 1360 residues long: Zinc finger protein GLI1 (1360 aa).

The tract at residues 198–245 (DTIGSKRLEDGSEGDISSPASVGTQDPLLGLLDGRDDLEKDDGKHEPE) is disordered. Basic and acidic residues predominate over residues 230–245 (DGRDDLEKDDGKHEPE). The C2H2-type 1 zinc-finger motif lies at 250–275 (TNCHWESCTKEFDTQEHLVHHINNEH). Positions 298-306 (KAQYMLVVH) are interaction with DNA. 3 C2H2-type zinc fingers span residues 316 to 340 (HKCT…LRSH), 346 to 371 (YVCE…NRTH), and 377 to 402 (YVCK…KTVH). Interaction with DNA regions lie at residues 360–365 (ASDRAK) and 390–396 (DPSSLRK). Disordered stretches follow at residues 390-434 (DPSS…NVKG), 457-500 (ITLK…SFED), 718-740 (IIHP…RTGG), and 1120-1213 (YMNY…IQPQ). Over residues 461–473 (SQPSPGGQSSCSS) the composition is skewed to low complexity. Positions 474-496 (ERSPLGSTNNNDSGVEMNANTGG) are enriched in polar residues. The segment covering 1134–1143 (SPSSQDSQSS) has biased composition (low complexity). Polar residues predominate over residues 1173–1190 (RQHSVSSQSTYMGSPNQL).

The protein belongs to the GLI C2H2-type zinc-finger protein family.

It localises to the cytoplasm. Its subcellular location is the nucleus. In terms of biological role, acts as a transcriptional activator. Binds to the DNA consensus sequence 5'-GACCACCCA-3'. May regulate the transcription of specific genes during normal development. Mediates SHH signaling. Plays a role in cell proliferation and differentiation via its role in SHH signaling. The polypeptide is Zinc finger protein GLI1 (gli1) (Xenopus laevis (African clawed frog)).